A 296-amino-acid polypeptide reads, in one-letter code: Sulfotransferase 1C2 (296 aa).

49-54 contacts 3'-phosphoadenylyl sulfate; sequence KAGTTW. 107-109 is a substrate binding site; sequence KTH. Histidine 109 serves as the catalytic Proton acceptor. 3'-phosphoadenylyl sulfate is bound by residues arginine 131, serine 139, tyrosine 194, and 228–233; that span reads TSFEKM. Residue serine 139 is modified to Phosphoserine. A Phosphoserine modification is found at serine 254. 256–260 is a binding site for 3'-phosphoadenylyl sulfate; it reads FMRKG.

The protein belongs to the sulfotransferase 1 family. In terms of tissue distribution, found in adult stomach, kidney and thyroid gland, and in fetal kidney and liver.

It localises to the cytoplasm. The protein localises to the lysosome. Its subcellular location is the mitochondrion. The catalysed reaction is a phenol + 3'-phosphoadenylyl sulfate = an aryl sulfate + adenosine 3',5'-bisphosphate + H(+). The enzyme catalyses cholesterol + 3'-phosphoadenylyl sulfate = cholesterol sulfate + adenosine 3',5'-bisphosphate + H(+). Sulfotransferase that utilizes 3'-phospho-5'-adenylyl sulfate (PAPS) to catalyze the sulfate conjugation of phenolic compounds. Does not transfer sulfate to steroids, dopamine, acetaminophen, or alpha-naphthol. Except in mitochondria, where it can add sulfate to cholesterol producing cholesterol sulfate, which alters mitochondrial membrane organization, and impacts protein complex mobility increasing state-III respiration, thereby modulating mitochondrial respiration. Catalyzes the sulfation of the carcinogenic N-hydroxy-2-acetylaminofluorene leading to highly reactive intermediates capable of forming DNA adducts, potentially resulting in mutagenesis. This Homo sapiens (Human) protein is Sulfotransferase 1C2 (SULT1C2).